Here is a 507-residue protein sequence, read N- to C-terminus: Maturase K (507 aa).

It belongs to the intron maturase 2 family. MatK subfamily.

Its subcellular location is the plastid. It localises to the chloroplast. Functionally, usually encoded in the trnK tRNA gene intron. Probably assists in splicing its own and other chloroplast group II introns. The polypeptide is Maturase K (Lens culinaris (Lentil)).